The primary structure comprises 465 residues: UDP-N-acetylmuramoylalanine--D-glutamate ligase (465 aa).

Residue 116–122 (GTNGKTT) coordinates ATP.

This sequence belongs to the MurCDEF family.

It is found in the cytoplasm. The catalysed reaction is UDP-N-acetyl-alpha-D-muramoyl-L-alanine + D-glutamate + ATP = UDP-N-acetyl-alpha-D-muramoyl-L-alanyl-D-glutamate + ADP + phosphate + H(+). The protein operates within cell wall biogenesis; peptidoglycan biosynthesis. Cell wall formation. Catalyzes the addition of glutamate to the nucleotide precursor UDP-N-acetylmuramoyl-L-alanine (UMA). This Thermobifida fusca (strain YX) protein is UDP-N-acetylmuramoylalanine--D-glutamate ligase.